The sequence spans 757 residues: Dolichyl-diphosphooligosaccharide--protein glycosyltransferase subunit stt-3 (757 aa).

Over 1–13 the chain is Cytoplasmic; sequence MTSTTAARTASSR. A helical transmembrane segment spans residues 14 to 34; that stretch reads VGATTLLTIVVLALAWFVGFA. Over 35 to 121 the chain is Lumenal; that stretch reads SRLFAIVRFE…VHIREVCVFL (87 aa). The DXD motif 1 motif lies at 49-51; it reads EFD. Asp51 serves as a coordination point for Mn(2+). A helical membrane pass occupies residues 122–140; that stretch reads APTFSGLTAIATYLLTKEL. Residues 141 to 142 lie on the Cytoplasmic side of the membrane; it reads WS. Residues 143-160 form a helical membrane-spanning segment; that stretch reads PGAGLFAACFIAISPGYT. Topologically, residues 161-171 are lumenal; it reads SRSVAGSYDNE. Asp169 and Glu171 together coordinate Mn(2+). Residues 169–171 carry the DXD motif 2 motif; sequence DNE. Residues 172–191 form a helical membrane-spanning segment; that stretch reads GIAIFALQFTYYLWVKSLKT. The Cytoplasmic segment spans residues 192–193; the sequence is GS. The helical transmembrane segment at 194-208 threads the bilayer; that stretch reads IMWASLCALSYFYMV. Over 209–210 the chain is Lumenal; it reads SA. 2 helical membrane passes run 211 to 235 and 236 to 261; these read WGGYVFIINLIPLHALALIIMGRYS and SRLFVSYTSFYCLATILSMQVPFVGF. Residues 262-269 are Lumenal-facing; the sequence is QPVRTSEH. A helical membrane pass occupies residues 270 to 289; it reads MPAFGVFGLLQIVALMHYAR. Residues 290-299 lie on the Cytoplasmic side of the membrane; that stretch reads NRITRQQFMT. A helical transmembrane segment spans residues 300–320; that stretch reads LFVGGLTILGALSVVVYFALV. The Lumenal segment spans residues 321 to 358; that stretch reads WGGYVAPFSGRFYSLWDTGYAKIHIPIIASVSEHQPTT. The SVSE motif motif lies at 350-353; the sequence is SVSE. The chain crosses the membrane as a helical span at residues 359–381; sequence WVSFFFDLHITAAVFPVGLWYCI. At 382–387 the chain is on the cytoplasmic side; it reads KKVNDE. A helical membrane pass occupies residues 388 to 404; it reads RVFIILYAVSAVYFAGV. Residues 405–408 are Lumenal-facing; the sequence is MVRL. Arg407 contributes to the dolichyl diphosphooligosaccharide binding site. Residues 409–430 form a helical membrane-spanning segment; it reads MLTLTPAVCVLAGIGFSYTFEK. Over 431–469 the chain is Cytoplasmic; sequence YLKDEETKERSSSQSGTTKDEKLYDKAAKNVKSRNANDG. Residues 470–495 form a helical membrane-spanning segment; sequence DESGVSSNVRTIISIILVIFLLMFVV. The Lumenal segment spans residues 496-757; that stretch reads HATYVTSNAY…IRPAPTASKA (262 aa). Residues 547–549 form an interacts with target acceptor peptide in protein substrate region; sequence WWD. The WWDYG motif signature appears at 547 to 551; the sequence is WWDYG. Residue Tyr552 coordinates dolichyl diphosphooligosaccharide. N-linked (GlcNAc...) asparagine glycans are attached at residues Asn559 and Asn566. An N-linked (GlcNAc...) (high mannose) asparagine glycan is attached at Asn570. Asn584 carries an N-linked (GlcNAc...) asparagine glycan. The short motif at 614-621 is the DK motif element; sequence DINKFLWM. The segment at 721–757 is disordered; the sequence is RPTVKSEEATIPIKGKKATQGKNKKGVIRPAPTASKA. Basic residues predominate over residues 734–747; sequence KGKKATQGKNKKGV.

Belongs to the STT3 family. Component of the oligosaccharyltransferase (OST) complex. It depends on Mg(2+) as a cofactor. Mn(2+) is required as a cofactor.

It localises to the endoplasmic reticulum membrane. It carries out the reaction a di-trans,poly-cis-dolichyl diphosphooligosaccharide + L-asparaginyl-[protein] = N(4)-(oligosaccharide-(1-&gt;4)-N-acetyl-beta-D-glucosaminyl-(1-&gt;4)-N-acetyl-beta-D-glucosaminyl)-L-asparaginyl-[protein] + a di-trans,poly-cis-dolichyl diphosphate + H(+). It participates in protein modification; protein glycosylation. Functionally, catalytic subunit of the oligosaccharyl transferase (OST) complex that catalyzes the initial transfer of a defined glycan (Glc(3)Man(9)GlcNAc(2) in eukaryotes) from the lipid carrier dolichol-pyrophosphate to an asparagine residue within an Asn-X-Ser/Thr consensus motif in nascent polypeptide chains, the first step in protein N-glycosylation. N-glycosylation occurs cotranslationally and the complex associates with the Sec61 complex at the channel-forming translocon complex that mediates protein translocation across the endoplasmic reticulum (ER). All subunits are required for a maximal enzyme activity. This subunit contains the active site and the acceptor peptide and donor lipid-linked oligosaccharide (LLO) binding pockets. This Caenorhabditis elegans protein is Dolichyl-diphosphooligosaccharide--protein glycosyltransferase subunit stt-3.